A 342-amino-acid polypeptide reads, in one-letter code: Ubiquitin fusion degradation protein 1 homolog (342 aa).

Disordered regions lie at residues 245-276 (FGGAGRRLDGKKKPSSSVSLSDGTGVSTSNAA) and 318-342 (EKEASKAGQPSNVFRGGNRTLRGAR). A compositionally biased stretch (polar residues) spans 259–275 (SSSVSLSDGTGVSTSNA).

Belongs to the UFD1 family. Forms a complex composed of ubxn-3, ufd-1, npl-4.1 and cdc-48.1; within the complex interacts with cdc-48.1. Interacts with cdc-48.2. Interacts with npl-4.1 and/or npl-4.2.

The protein localises to the cytoplasm. Its subcellular location is the nucleus. Functions at a post-ubiquitination step in the ubiquitin fusion degradation (UFD) pathway. In association with npl-4.1 and/or npl-4.2 and ATPase cdc-48.1 and/or cdc-48.2, involved in the cytoplasmic elimination of misfolded proteins exported from the ER. This pathway, known as ERAD, prevents the activation of the unfolded protein response (UPR) caused by the accumulation of misfolded proteins in the ER. During S phase and in association with npl-4.1 and/or npl-4.2, cdc-48.1 and/or cdc-48.2 and ubxn-3, ensures the degradation of DNA licensing factor cdt-1 after the initiation of DNA replication and thus the disassembly of the DNA replication CMG helicase complex by promoting the dissociation from chromatin of several of its components including cdc-45 and sld-5. Regulates ubxn-3 nuclear localization during S phase. This is Ubiquitin fusion degradation protein 1 homolog (ufd-1) from Caenorhabditis elegans.